A 150-amino-acid chain; its full sequence is Protein Smg homolog (150 aa).

Belongs to the Smg family.

This chain is Protein Smg homolog, found in Leptothrix cholodnii (strain ATCC 51168 / LMG 8142 / SP-6) (Leptothrix discophora (strain SP-6)).